The sequence spans 694 residues: Elongation factor G 2 (694 aa).

Residues 8 to 282 form the tr-type G domain; sequence TAIRNIGIMA…AVVSYLPSPL (275 aa). Residues 17–24, 81–85, and 135–138 each bind GTP; these read AHIDAGKT, DTPGH, and NKMD.

It belongs to the TRAFAC class translation factor GTPase superfamily. Classic translation factor GTPase family. EF-G/EF-2 subfamily.

It is found in the cytoplasm. In terms of biological role, catalyzes the GTP-dependent ribosomal translocation step during translation elongation. During this step, the ribosome changes from the pre-translocational (PRE) to the post-translocational (POST) state as the newly formed A-site-bound peptidyl-tRNA and P-site-bound deacylated tRNA move to the P and E sites, respectively. Catalyzes the coordinated movement of the two tRNA molecules, the mRNA and conformational changes in the ribosome. The sequence is that of Elongation factor G 2 from Syntrophomonas wolfei subsp. wolfei (strain DSM 2245B / Goettingen).